Reading from the N-terminus, the 426-residue chain is Probable histidine--tRNA ligase (426 aa).

It belongs to the class-II aminoacyl-tRNA synthetase family. In terms of assembly, homodimer.

The protein localises to the cytoplasm. The enzyme catalyses tRNA(His) + L-histidine + ATP = L-histidyl-tRNA(His) + AMP + diphosphate + H(+). The protein is Probable histidine--tRNA ligase (hisS) of Tropheryma whipplei (strain TW08/27) (Whipple's bacillus).